The primary structure comprises 205 residues: Adenylyl-sulfate kinase (205 aa).

31–38 (GLSGAGKS) provides a ligand contact to ATP. Ser-105 serves as the catalytic Phosphoserine intermediate.

The protein belongs to the APS kinase family.

It catalyses the reaction adenosine 5'-phosphosulfate + ATP = 3'-phosphoadenylyl sulfate + ADP + H(+). The protein operates within sulfur metabolism; hydrogen sulfide biosynthesis; sulfite from sulfate: step 2/3. Its function is as follows. Catalyzes the synthesis of activated sulfate. The sequence is that of Adenylyl-sulfate kinase from Shewanella baltica (strain OS223).